A 462-amino-acid polypeptide reads, in one-letter code: Integrator complex subunit 12 (462 aa).

A disordered region spans residues 42 to 132 (GIDSSYRPSQ…PETQSSPITV (91 aa)). The segment covering 59–86 (ISSTKNISIKQEPKISSSLPSGNNNGKV) has biased composition (polar residues). A Glycyl lysine isopeptide (Lys-Gly) (interchain with G-Cter in SUMO2) cross-link involves residue K68. The segment covering 88–124 (TTEKVKKEAEKRPADKMKSDITEGVDIPKKPRLEKPE) has biased composition (basic and acidic residues). S128 bears the Phosphoserine mark. The PHD-type zinc-finger motif lies at 159 to 215 (GLACVVCRQMMVASGNQLVECQECHNLYHRDCHKPQVTDKEANDPRLVWYCARCTRQ). A Glycyl lysine isopeptide (Lys-Gly) (interchain with G-Cter in SUMO2) cross-link involves residue K254. Over residues 301 to 328 (SSAGPSTAKLSSTTQNNTGKPATSSANQ) the composition is skewed to polar residues. A disordered region spans residues 301–462 (SSAGPSTAKL…KKAAQKKLKK (162 aa)). Composition is skewed to low complexity over residues 347–358 (KIGSNNSTTPTV) and 382–437 (VSKV…GPTS). A compositionally biased stretch (basic residues) spans 449–462 (QMVKKKAAQKKLKK).

The protein belongs to the Integrator subunit 12 family. Component of the Integrator complex, composed of core subunits INTS1, INTS2, INTS3, INTS4, INTS5, INTS6, INTS7, INTS8, INTS9/RC74, INTS10, INTS11/CPSF3L, INTS12, INTS13, INTS14 and INTS15. The core complex associates with protein phosphatase 2A subunits PPP2CA and PPP2R1A, to form the Integrator-PP2A (INTAC) complex. In terms of processing, dephosphorylated at Ser-128 by the PNUTS-PP1 complex, promoting RNA polymerase II transcription pause-release.

The protein resides in the nucleus. Functionally, component of the integrator complex, a multiprotein complex that terminates RNA polymerase II (Pol II) transcription in the promoter-proximal region of genes. The integrator complex provides a quality checkpoint during transcription elongation by driving premature transcription termination of transcripts that are unfavorably configured for transcriptional elongation: the complex terminates transcription by (1) catalyzing dephosphorylation of the C-terminal domain (CTD) of Pol II subunit POLR2A/RPB1 and SUPT5H/SPT5, (2) degrading the exiting nascent RNA transcript via endonuclease activity and (3) promoting the release of Pol II from bound DNA. The integrator complex is also involved in terminating the synthesis of non-coding Pol II transcripts, such as enhancer RNAs (eRNAs), small nuclear RNAs (snRNAs), telomerase RNAs and long non-coding RNAs (lncRNAs). Mediates recruitment of cytoplasmic dynein to the nuclear envelope, probably as component of the integrator complex. In Pongo abelii (Sumatran orangutan), this protein is Integrator complex subunit 12 (INTS12).